The following is a 326-amino-acid chain: Vitamin B12 import system permease protein BtuC (326 aa).

Residues 1–10 are Cytoplasmic-facing; the sequence is MLTLARQQQR. Residues 11-35 form a helical membrane-spanning segment; it reads QNIRWLLCLSVLMLLALLLSLCAGE. The Periplasmic portion of the chain corresponds to 36 to 56; the sequence is QWISPGDWFSPRGELFVWQIR. A helical transmembrane segment spans residues 57 to 81; sequence LPRTLAVLLVGAALAISGAVMQALF. At 82–92 the chain is on the cytoplasmic side; sequence ENPLAEPGLLG. A helical membrane pass occupies residues 93–107; it reads VSNGAGVGLIAAVLL. Topologically, residues 108-113 are periplasmic; it reads GQGQLP. The chain crosses the membrane as a helical span at residues 114-138; that stretch reads NWALGLCAIAGALIITLILLRFARR. Topologically, residues 139-141 are cytoplasmic; the sequence is HLS. A helical transmembrane segment spans residues 142-166; the sequence is TSRLLLAGVALGIICSALMTWAIYF. Topologically, residues 167 to 190 are periplasmic; that stretch reads STSVDLRQLMYWMMGGFGGVDWRQ. Residues 191–206 form a helical membrane-spanning segment; sequence SWLMLALIPMLLWICC. Over 207 to 228 the chain is Cytoplasmic; sequence QSRPMNMLALGEISARQLGLPL. A helical transmembrane segment spans residues 229 to 249; that stretch reads WFWRNVLVAATGWMVGVSVAL. At 250 to 257 the chain is on the periplasmic side; sequence AGAIGFIG. The helical transmembrane segment at 258 to 267 threads the bilayer; the sequence is LVIPHILRLC. At 268–274 the chain is on the cytoplasmic side; it reads GLTDHRA. The chain crosses the membrane as a helical span at residues 275–296; sequence LLPGCALAGASALLLADIVARL. Residues 297–304 are Periplasmic-facing; sequence ALAAAELP. Residues 305–324 form a helical membrane-spanning segment; that stretch reads IGVVTATLGAPVFIWLLLKA. The Cytoplasmic portion of the chain corresponds to 325-326; sequence GR.

Belongs to the binding-protein-dependent transport system permease family. FecCD subfamily. The complex is composed of two ATP-binding proteins (BtuD), two transmembrane proteins (BtuC) and a solute-binding protein (BtuF).

The protein localises to the cell inner membrane. In terms of biological role, part of the ABC transporter complex BtuCDF involved in vitamin B12 import. Involved in the translocation of the substrate across the membrane. This is Vitamin B12 import system permease protein BtuC (btuC) from Escherichia coli O157:H7.